A 1242-amino-acid polypeptide reads, in one-letter code: ATP-dependent RNA helicase DHX8 (1242 aa).

Disordered stretches follow at residues R75 to E283 and S354 to P449. Basic and acidic residues-rich tracts occupy residues T87–S97, Y113–M141, and R180–S196. 2 stretches are compositionally biased toward basic residues: residues D197–R222 and D232–S252. A compositionally biased stretch (basic and acidic residues) spans R253 to E269. The 72-residue stretch at G285 to K356 folds into the S1 motif domain. Over residues F388 to G399 the composition is skewed to polar residues. The span at P439–P449 shows a compositional bias: acidic residues. One can recognise a Helicase ATP-binding domain in the interval I596–P759. G609 to T616 lines the ATP pocket. The DEAH box signature appears at D706–H709. Residues Y777 to G957 form the Helicase C-terminal domain.

Belongs to the DEAD box helicase family. DEAH subfamily. DDX8/PRP22 sub-subfamily. In terms of assembly, identified in the spliceosome C complex.

The protein resides in the nucleus. It carries out the reaction ATP + H2O = ADP + phosphate + H(+). Involved in pre-mRNA splicing as component of the spliceosome. Facilitates nuclear export of spliced mRNA by releasing the RNA from the spliceosome. Before and after egg-chamber formation, required for nurse-cell chromatin dispersal (NCCD) probably by playing a role in spliceosome localization to chromatin/interchromatin spaces. The sequence is that of ATP-dependent RNA helicase DHX8 from Drosophila melanogaster (Fruit fly).